We begin with the raw amino-acid sequence, 64 residues long: Large ribosomal subunit protein uL30 (64 aa).

A disordered region spans residues 1 to 22 (MAKAAKTIKVEQTGSAIRRHHS).

This sequence belongs to the universal ribosomal protein uL30 family. As to quaternary structure, part of the 50S ribosomal subunit.

This is Large ribosomal subunit protein uL30 from Nitrobacter winogradskyi (strain ATCC 25391 / DSM 10237 / CIP 104748 / NCIMB 11846 / Nb-255).